Consider the following 94-residue polypeptide: Co-chaperonin GroES (94 aa).

This sequence belongs to the GroES chaperonin family. As to quaternary structure, heptamer of 7 subunits arranged in a ring. Interacts with the chaperonin GroEL.

Its subcellular location is the cytoplasm. Its function is as follows. Together with the chaperonin GroEL, plays an essential role in assisting protein folding. The GroEL-GroES system forms a nano-cage that allows encapsulation of the non-native substrate proteins and provides a physical environment optimized to promote and accelerate protein folding. GroES binds to the apical surface of the GroEL ring, thereby capping the opening of the GroEL channel. The chain is Co-chaperonin GroES from Lactococcus lactis subsp. lactis (strain IL1403) (Streptococcus lactis).